Reading from the N-terminus, the 539-residue chain is 2-isopropylmalate synthase (539 aa).

The 262-residue stretch at 8-269 folds into the Pyruvate carboxyltransferase domain; the sequence is VLIFDTTLRD…YFNPFFGRPP (262 aa). Mn(2+) contacts are provided by D17, H208, H210, and N244. The regulatory domain stretch occupies residues 408-539; sequence QLKLVQVSCG…DLAKVEKKGI (132 aa).

Belongs to the alpha-IPM synthase/homocitrate synthase family. LeuA type 1 subfamily. Homodimer. The cofactor is Mn(2+).

Its subcellular location is the cytoplasm. The catalysed reaction is 3-methyl-2-oxobutanoate + acetyl-CoA + H2O = (2S)-2-isopropylmalate + CoA + H(+). It functions in the pathway amino-acid biosynthesis; L-leucine biosynthesis; L-leucine from 3-methyl-2-oxobutanoate: step 1/4. In terms of biological role, catalyzes the condensation of the acetyl group of acetyl-CoA with 3-methyl-2-oxobutanoate (2-ketoisovalerate) to form 3-carboxy-3-hydroxy-4-methylpentanoate (2-isopropylmalate). The chain is 2-isopropylmalate synthase from Prochlorococcus marinus (strain NATL2A).